The chain runs to 571 residues: Endonuclease/exonuclease/phosphatase family domain-containing protein 1 (571 aa).

A disordered region spans residues 1–20; that stretch reads MGSTLGCHRSIPRDPSDLSH. A lipid anchor (N-myristoyl glycine) is attached at Gly-2. A compositionally biased stretch (basic and acidic residues) spans 11–20; it reads IPRDPSDLSH. A phosphoserine mark is found at Ser-16, Ser-21, and Ser-25. Residues 38-67 enclose the HhH domain; the sequence is ERLNINTATEEELMTLPGVTRAVARSIVEY. Ser-106, Ser-110, Ser-162, and Ser-175 each carry phosphoserine. The tract at residues 202–227 is disordered; it reads SRPPSTHTNGGLTFTAKPHPSPTSLS. Residues 204–213 show a composition bias toward polar residues; that stretch reads PPSTHTNGGL. At Thr-267 the chain carries Phosphothreonine. Position 430 is a phosphoserine (Ser-430). The tract at residues 548-571 is disordered; sequence RKEGPRSGNGLTLERSEANIKHER. Residues 561-571 show a composition bias toward basic and acidic residues; that stretch reads ERSEANIKHER.

This Bos taurus (Bovine) protein is Endonuclease/exonuclease/phosphatase family domain-containing protein 1 (EEPD1).